The following is a 142-amino-acid chain: Small heat shock protein IbpB (142 aa).

Positions 25–136 (GQEPQGFPPY…QPQRIAIGTT (112 aa)) constitute a sHSP domain.

This sequence belongs to the small heat shock protein (HSP20) family. As to quaternary structure, homodimer. Forms homomultimers of about 100-150 subunits at optimal growth temperatures. Conformation changes to oligomers at high temperatures or high ionic concentrations. The decrease in size of the multimers is accompanied by an increase in chaperone activity.

Its subcellular location is the cytoplasm. Its function is as follows. Associates with aggregated proteins, together with IbpA, to stabilize and protect them from irreversible denaturation and extensive proteolysis during heat shock and oxidative stress. Aggregated proteins bound to the IbpAB complex are more efficiently refolded and reactivated by the ATP-dependent chaperone systems ClpB and DnaK/DnaJ/GrpE. Its activity is ATP-independent. This is Small heat shock protein IbpB from Serratia proteamaculans (strain 568).